The sequence spans 358 residues: Chorismate synthase (358 aa).

An NADP(+)-binding site is contributed by Arg-46. Residues 123–125, 235–236, Gly-275, 290–294, and Arg-316 each bind FMN; these read RSS, NA, and KPTPS.

Belongs to the chorismate synthase family. As to quaternary structure, homotetramer. FMNH2 is required as a cofactor.

It carries out the reaction 5-O-(1-carboxyvinyl)-3-phosphoshikimate = chorismate + phosphate. Its pathway is metabolic intermediate biosynthesis; chorismate biosynthesis; chorismate from D-erythrose 4-phosphate and phosphoenolpyruvate: step 7/7. Catalyzes the anti-1,4-elimination of the C-3 phosphate and the C-6 proR hydrogen from 5-enolpyruvylshikimate-3-phosphate (EPSP) to yield chorismate, which is the branch point compound that serves as the starting substrate for the three terminal pathways of aromatic amino acid biosynthesis. This reaction introduces a second double bond into the aromatic ring system. In Sulfurimonas denitrificans (strain ATCC 33889 / DSM 1251) (Thiomicrospira denitrificans (strain ATCC 33889 / DSM 1251)), this protein is Chorismate synthase.